Here is a 1066-residue protein sequence, read N- to C-terminus: Hemoglobin and hemoglobin-haptoglobin-binding protein C (1066 aa).

The N-terminal stretch at Met1 to Ala24 is a signal peptide. 7 tandem repeats follow at residues Gln26–Asn29, Gln30–Asn33, Gln34–Asn37, Gln38–Asn41, Gln42–Asn45, Gln46–Asn49, and Gln50–Asn53. The interval Gln26 to Asn53 is 7 X 4 AA tandem repeats of Q-P-T-N. Low complexity predominate over residues Gln26–Gln54. Positions Gln26–Asn57 are disordered. Residues Glu63–Ser70 carry the TonB box motif. A TBDR plug domain is found at Asn66–Lys200. Positions Asp208–Phe1066 constitute a TBDR beta-barrel domain. A TonB C-terminal box motif is present at residues Asn1049–Phe1066.

The protein belongs to the TonB-dependent receptor family. Hemoglobin/haptoglobin binding protein subfamily.

The protein localises to the cell outer membrane. Its function is as follows. Acts as a receptor for hemoglobin or the hemoglobin/haptoglobin complex of the human host and is required for heme uptake. The chain is Hemoglobin and hemoglobin-haptoglobin-binding protein C (hgpC) from Haemophilus influenzae.